We begin with the raw amino-acid sequence, 540 residues long: Ribonuclease Y (540 aa).

The chain crosses the membrane as a helical span at residues 4 to 24 (TILVPVAVAIVSVLVGGCAGY). In terms of domain architecture, KH spans 230 to 293 (TVSVVNLPSD…EIAKRALERL (64 aa)). In terms of domain architecture, HD spans 356 to 449 (VLSHSIEVGK…VVAADTISSA (94 aa)).

It belongs to the RNase Y family.

It localises to the cell membrane. Endoribonuclease that initiates mRNA decay. In Lactobacillus johnsonii (strain CNCM I-12250 / La1 / NCC 533), this protein is Ribonuclease Y.